The chain runs to 505 residues: Probable RNA exonuclease NGL3 (505 aa).

Disordered regions lie at residues 1 to 75 (MDSQ…FPTP) and 334 to 369 (RNGE…SFTA). Positions 10–23 (SPSQKESSSTSGLV) are enriched in polar residues. The segment covering 36-54 (HRDQLSVDQIKKIREERAQ) has biased composition (basic and acidic residues). Position 62 is a phosphoserine (Ser62). Positions 338-347 (ESDQDDEECD) are enriched in acidic residues.

Belongs to the CCR4/nocturin family.

The polypeptide is Probable RNA exonuclease NGL3 (NGL3) (Saccharomyces cerevisiae (strain ATCC 204508 / S288c) (Baker's yeast)).